We begin with the raw amino-acid sequence, 543 residues long: Probable E3 ubiquitin-protein ligase ARI9 (543 aa).

Residues 1-26 (MDFSDDDMIDNKSGEENYSYGGGNES) are disordered. A TRIAD supradomain region spans residues 124–332 (VNIQCGICFE…RHSGACNRFV (209 aa)). Positions 128, 131, 145, 147, 150, 153, 173, 178, 217, 222, 240, 242, 247, 250, 255, 260, 287, and 290 each coordinate Zn(2+). Residues 128–178 (CGICFESYTREEIARVSCGHPYCKTCWAGYITTKIEDGPGCLRVKCPEPSC) form an RING-type 1 zinc finger. The IBR-type zinc-finger motif lies at 197–260 (EKYSRYILRS…SEDAHSPVDC (64 aa)). The RING-type 2; atypical zinc-finger motif lies at 287-317 (CPECKRPIEKNDGCNHMTCSAPCGHEFCWIC). C300 is a catalytic residue. Zn(2+)-binding residues include C305, C309, C314, C317, H324, and C328.

Belongs to the RBR family. Ariadne subfamily. Requires Zn(2+) as cofactor.

It catalyses the reaction [E2 ubiquitin-conjugating enzyme]-S-ubiquitinyl-L-cysteine + [acceptor protein]-L-lysine = [E2 ubiquitin-conjugating enzyme]-L-cysteine + [acceptor protein]-N(6)-ubiquitinyl-L-lysine.. It functions in the pathway protein modification; protein ubiquitination. Functionally, might act as an E3 ubiquitin-protein ligase, or as part of E3 complex, which accepts ubiquitin from specific E2 ubiquitin-conjugating enzymes and then transfers it to substrates. The chain is Probable E3 ubiquitin-protein ligase ARI9 (ARI9) from Arabidopsis thaliana (Mouse-ear cress).